The following is a 109-amino-acid chain: B melanoma antigen 3 (109 aa).

The N-terminal stretch at 1–17 (MAAGVVFLALSAQLLQA) is a signal peptide.

Belongs to the BAGE family. In terms of tissue distribution, not expressed in normal tissues except in testis. Expressed in melanoma, bladder and lung carcinomas.

It is found in the secreted. Unknown. Candidate gene encoding tumor antigens. This Homo sapiens (Human) protein is B melanoma antigen 3 (BAGE3).